The sequence spans 1255 residues: TBC1 domain family member 1 (1255 aa).

Ser-146 carries the phosphoserine modification. Residues 208–228 are disordered; sequence RTDWEAPTGQPSAPGPRPMRK. A Phosphoserine; by PKB/AKT1 modification is found at Ser-229. Residue Ser-231 is modified to Phosphoserine; by AMPK. One can recognise a PID domain in the interval 238 to 398; the sequence is LAFRKEFQDA…LHKLCERIEG (161 aa). Ser-489 is subject to Phosphoserine; by PKB/AKT1. Ser-497 is subject to Phosphoserine. Thr-499 bears the Phosphothreonine; by PKB/AKT1 mark. Ser-501, Ser-519, Ser-521, Ser-559, Ser-560, Ser-564, Ser-565, and Ser-579 each carry phosphoserine. 2 disordered regions span residues 509 to 544 and 559 to 581; these read GNKARGLQDHSASVDLDSSTSSTLSNTSKELSMGDK and SSDDLSSDSEGHIAEESALLSPQ. Residues 519-539 show a composition bias toward low complexity; the sequence is SASVDLDSSTSSTLSNTSKEL. At Thr-590 the chain carries Phosphothreonine. Disordered stretches follow at residues 595–614 and 621–681; these read PVECPAPPEPAQSSPGVSQR and SVST…GNAV. Ser-608 is subject to Phosphoserine. Position 621 is a phosphoserine; by PKB/AKT1 (Ser-621). Phosphoserine is present on residues Ser-660 and Ser-661. A compositionally biased stretch (polar residues) spans 670–679; sequence HNSSGEQSGN. Ser-697 is modified (phosphoserine; by PKB/AKT1). Phosphoserine occurs at positions 698 and 699. Phosphoserine; by AMPK is present on Ser-700. Residues 764–786 are disordered; it reads DSPSRYEDYSELGELPPRSPLEP. Residues Ser-782 and Ser-1028 each carry the phosphoserine modification. Positions 887–1081 constitute a Rab-GAP TBC domain; it reads GVPRHHRGEI…RVFDMIFLQG (195 aa). Tyr-1039 is modified (phosphotyrosine). At Thr-1218 the chain carries Phosphothreonine. A disordered region spans residues 1233–1255; it reads LRRQSARPSTPEPDCTQLEPTGD.

Interacts with APPL2 (via BAR domain); interaction is dependent of TBC1D1 phosphorylation at Ser-229; interaction diminishes the phosphorylation of TBC1D1 at Thr-590, resulting in inhibition of SLC2A4/GLUT4 translocation and glucose uptake. Insulin-stimulated phosphorylation by AKT family kinases stimulates SLC2A4/GLUT4 translocation. As to expression, expressed in highest levels in hematopoietic cells, testis and kidney.

Its subcellular location is the nucleus. In terms of biological role, may act as a GTPase-activating protein for Rab family protein(s). May play a role in the cell cycle and differentiation of various tissues. Involved in the trafficking and translocation of GLUT4-containing vesicles and insulin-stimulated glucose uptake into cells. The protein is TBC1 domain family member 1 (Tbc1d1) of Mus musculus (Mouse).